Consider the following 334-residue polypeptide: Transaldolase (334 aa).

The Schiff-base intermediate with substrate role is filled by Lys136.

This sequence belongs to the transaldolase family. Type 1 subfamily. In terms of assembly, homodimer.

It is found in the cytoplasm. The catalysed reaction is D-sedoheptulose 7-phosphate + D-glyceraldehyde 3-phosphate = D-erythrose 4-phosphate + beta-D-fructose 6-phosphate. The protein operates within carbohydrate degradation; pentose phosphate pathway; D-glyceraldehyde 3-phosphate and beta-D-fructose 6-phosphate from D-ribose 5-phosphate and D-xylulose 5-phosphate (non-oxidative stage): step 2/3. Functionally, transaldolase is important for the balance of metabolites in the pentose-phosphate pathway. This chain is Transaldolase, found in Nostoc punctiforme (strain ATCC 29133 / PCC 73102).